The chain runs to 403 residues: 1-deoxy-D-xylulose 5-phosphate reductoisomerase (403 aa).

Threonine 18, glycine 19, serine 20, isoleucine 21, glutamine 46, and asparagine 132 together coordinate NADPH. Lysine 133 serves as a coordination point for 1-deoxy-D-xylulose 5-phosphate. Residue glutamate 134 coordinates NADPH. A Mn(2+)-binding site is contributed by aspartate 158. Residues serine 159, glutamate 160, serine 189, and histidine 212 each contribute to the 1-deoxy-D-xylulose 5-phosphate site. Glutamate 160 is a Mn(2+) binding site. Residue glycine 218 participates in NADPH binding. Serine 225, asparagine 230, lysine 231, and glutamate 234 together coordinate 1-deoxy-D-xylulose 5-phosphate. Glutamate 234 contributes to the Mn(2+) binding site.

It belongs to the DXR family. Mg(2+) serves as cofactor. Mn(2+) is required as a cofactor.

It catalyses the reaction 2-C-methyl-D-erythritol 4-phosphate + NADP(+) = 1-deoxy-D-xylulose 5-phosphate + NADPH + H(+). It participates in isoprenoid biosynthesis; isopentenyl diphosphate biosynthesis via DXP pathway; isopentenyl diphosphate from 1-deoxy-D-xylulose 5-phosphate: step 1/6. Catalyzes the NADPH-dependent rearrangement and reduction of 1-deoxy-D-xylulose-5-phosphate (DXP) to 2-C-methyl-D-erythritol 4-phosphate (MEP). This Aromatoleum aromaticum (strain DSM 19018 / LMG 30748 / EbN1) (Azoarcus sp. (strain EbN1)) protein is 1-deoxy-D-xylulose 5-phosphate reductoisomerase.